Consider the following 321-residue polypeptide: Cytochrome f (321 aa).

An N-terminal signal peptide occupies residues 1–38 (MKKNFYTISKTMSRSLKLILFSVFIGFSIFLIPQPTWA). 4 residues coordinate heme: Tyr-39, Cys-59, Cys-62, and His-63. The chain crosses the membrane as a helical span at residues 288–308 (VIGMIIFFIGVGLSQIMLVLK).

This sequence belongs to the cytochrome f family. As to quaternary structure, the 4 large subunits of the cytochrome b6-f complex are cytochrome b6, subunit IV (17 kDa polypeptide, PetD), cytochrome f and the Rieske protein, while the 4 small subunits are PetG, PetL, PetM and PetN. The complex functions as a dimer. It depends on heme as a cofactor.

The protein resides in the cellular thylakoid membrane. Functionally, component of the cytochrome b6-f complex, which mediates electron transfer between photosystem II (PSII) and photosystem I (PSI), cyclic electron flow around PSI, and state transitions. This Prochlorococcus marinus (strain NATL2A) protein is Cytochrome f.